The primary structure comprises 256 residues: Thiazole synthase (256 aa).

Lysine 91 (schiff-base intermediate with DXP) is an active-site residue. 1-deoxy-D-xylulose 5-phosphate contacts are provided by residues glycine 152, 179 to 180, and 201 to 202; these read AG and NT.

It belongs to the ThiG family. In terms of assembly, homotetramer. Forms heterodimers with either ThiH or ThiS.

The protein localises to the cytoplasm. The catalysed reaction is [ThiS sulfur-carrier protein]-C-terminal-Gly-aminoethanethioate + 2-iminoacetate + 1-deoxy-D-xylulose 5-phosphate = [ThiS sulfur-carrier protein]-C-terminal Gly-Gly + 2-[(2R,5Z)-2-carboxy-4-methylthiazol-5(2H)-ylidene]ethyl phosphate + 2 H2O + H(+). The protein operates within cofactor biosynthesis; thiamine diphosphate biosynthesis. In terms of biological role, catalyzes the rearrangement of 1-deoxy-D-xylulose 5-phosphate (DXP) to produce the thiazole phosphate moiety of thiamine. Sulfur is provided by the thiocarboxylate moiety of the carrier protein ThiS. In vitro, sulfur can be provided by H(2)S. The protein is Thiazole synthase of Erwinia tasmaniensis (strain DSM 17950 / CFBP 7177 / CIP 109463 / NCPPB 4357 / Et1/99).